Here is a 212-residue protein sequence, read N- to C-terminus: MAELTRIEGVLRTEFGKGASRRLRRDGRIPLVVYGNELDPVHVHVDTLDLHALVRNEGVNAVFELNIDGEDNLVMVKAIDQNVLTLDIDHADLLNVKRGERVEVEVPVIHEGLPAPGAMVVQDVDVLLLEVDVLDIPEEIVLDINGLEIGEQILAKDVKMPSNAVLVSDAEELVINIVEPEEEELPEDDEAAAEGEDAAAGEEAEAPAESED.

Residues 179-212 form a disordered region; that stretch reads EPEEEELPEDDEAAAEGEDAAAGEEAEAPAESED.

It belongs to the bacterial ribosomal protein bL25 family. CTC subfamily. In terms of assembly, part of the 50S ribosomal subunit; part of the 5S rRNA/L5/L18/L25 subcomplex. Contacts the 5S rRNA. Binds to the 5S rRNA independently of L5 and L18.

In terms of biological role, this is one of the proteins that binds to the 5S RNA in the ribosome where it forms part of the central protuberance. This is Large ribosomal subunit protein bL25 from Corynebacterium urealyticum (strain ATCC 43042 / DSM 7109).